The sequence spans 214 residues: External core antigen (214 aa).

A signal peptide spans 1-19 (MQLFHLCLIISCTCPTVQA). The segment at 25–27 (GWL) is HBEAG. Residues 165–214 (NAPILSTLPETTVVRRRDRGRSPRRRTPSPRRRRSQSPRRRRSQSRESQC) are disordered. The span at 178-207 (VRRRDRGRSPRRRTPSPRRRRSQSPRRRRS) shows a compositional bias: basic residues. The 1; half-length repeat unit spans residues 186–192 (SPRRRTP). The interval 186-208 (SPRRRTPSPRRRRSQSPRRRRSQ) is 3 X 8 AA repeats of S-P-R-R-R-R-S-Q. The propeptide occupies 186–214 (SPRRRTPSPRRRRSQSPRRRRSQSRESQC). A run of 2 repeats spans residues 193–200 (SPRRRRSQ) and 201–208 (SPRRRRSQ).

Belongs to the orthohepadnavirus precore antigen family. In terms of assembly, homodimerizes. In terms of processing, phosphorylated. Post-translationally, cleaved by host furin.

Its subcellular location is the secreted. The protein resides in the host nucleus. Functionally, may regulate immune response to the intracellular capsid in acting as a T-cell tolerogen, by having an immunoregulatory effect which prevents destruction of infected cells by cytotoxic T-cells. This immune regulation may predispose to chronicity during perinatal infections and prevent severe liver injury during adult infections. This is External core antigen from Homo sapiens (Human).